We begin with the raw amino-acid sequence, 300 residues long: Nicotinate-nucleotide pyrophosphorylase [carboxylating] (300 aa).

Residues 5–9 form an important for hexamer formation region; the sequence is QLLPK. Residues arginine 107, 150-151, 172-173, lysine 183, glutamate 213, aspartate 234, 260-262, and glycine 282 each bind quinolinate; these read RK, HR, and SGG.

It belongs to the NadC/ModD family. Hexamer formed by 3 homodimers.

It catalyses the reaction nicotinate beta-D-ribonucleotide + CO2 + diphosphate = quinolinate + 5-phospho-alpha-D-ribose 1-diphosphate + 2 H(+). It functions in the pathway cofactor biosynthesis; NAD(+) biosynthesis; nicotinate D-ribonucleotide from quinolinate: step 1/1. Its function is as follows. Involved in the catabolism of quinolinic acid (QA). This is Nicotinate-nucleotide pyrophosphorylase [carboxylating] (qprt) from Dictyostelium discoideum (Social amoeba).